Reading from the N-terminus, the 218-residue chain is Probable septum site-determining protein MinC (218 aa).

Belongs to the MinC family. As to quaternary structure, interacts with MinD and FtsZ.

In terms of biological role, cell division inhibitor that blocks the formation of polar Z ring septums. Rapidly oscillates between the poles of the cell to destabilize FtsZ filaments that have formed before they mature into polar Z rings. Prevents FtsZ polymerization. This Kosmotoga olearia (strain ATCC BAA-1733 / DSM 21960 / TBF 19.5.1) protein is Probable septum site-determining protein MinC.